The primary structure comprises 403 residues: Argininosuccinate synthase (403 aa).

Residues 13–21 (AYSGGLDTS) and Ala40 contribute to the ATP site. Residues Tyr91 and Ser96 each contribute to the L-citrulline site. Position 121 (Gly121) interacts with ATP. L-aspartate contacts are provided by Thr123, Asn127, and Asp128. Asn127 contacts L-citrulline. The L-citrulline site is built by Arg131, Ser180, Ser189, Glu265, and Tyr277.

The protein belongs to the argininosuccinate synthase family. Type 1 subfamily. In terms of assembly, homotetramer.

Its subcellular location is the cytoplasm. The catalysed reaction is L-citrulline + L-aspartate + ATP = 2-(N(omega)-L-arginino)succinate + AMP + diphosphate + H(+). The protein operates within amino-acid biosynthesis; L-arginine biosynthesis; L-arginine from L-ornithine and carbamoyl phosphate: step 2/3. This is Argininosuccinate synthase from Leptospira interrogans serogroup Icterohaemorrhagiae serovar Lai (strain 56601).